An 841-amino-acid polypeptide reads, in one-letter code: DNA ligase (841 aa).

Residues 33-37 (DAQYD), 82-83 (SL), and Glu-114 contribute to the NAD(+) site. The active-site N6-AMP-lysine intermediate is the Lys-116. Positions 137, 174, 300, and 324 each coordinate NAD(+). Residues Cys-418, Cys-421, Cys-436, and Cys-442 each coordinate Zn(2+). One can recognise a BRCT domain in the interval 758–841 (EKTGPLDGQT…AFLGEHGQQR (84 aa)).

Belongs to the NAD-dependent DNA ligase family. LigA subfamily. It depends on Mg(2+) as a cofactor. The cofactor is Mn(2+).

The enzyme catalyses NAD(+) + (deoxyribonucleotide)n-3'-hydroxyl + 5'-phospho-(deoxyribonucleotide)m = (deoxyribonucleotide)n+m + AMP + beta-nicotinamide D-nucleotide.. In terms of biological role, DNA ligase that catalyzes the formation of phosphodiester linkages between 5'-phosphoryl and 3'-hydroxyl groups in double-stranded DNA using NAD as a coenzyme and as the energy source for the reaction. It is essential for DNA replication and repair of damaged DNA. The protein is DNA ligase of Xanthomonas oryzae pv. oryzae (strain MAFF 311018).